The following is a 142-amino-acid chain: Hemoglobin subunit alpha-2 (142 aa).

The Globin domain occupies 2–142 (VLSAADKSNV…VSTVLTSKYR (141 aa)). His-59 serves as a coordination point for O2. His-88 serves as a coordination point for heme b.

It belongs to the globin family. In terms of assembly, heterotetramer of two alpha chains and two beta chains.

Involved in oxygen transport from the lung to the various peripheral tissues. Functionally, hemopressin acts as an antagonist peptide of the cannabinoid receptor CNR1. Hemopressin-binding efficiently blocks cannabinoid receptor CNR1 and subsequent signaling. The chain is Hemoglobin subunit alpha-2 (HBA2) from Capra hircus (Goat).